Consider the following 169-residue polypeptide: Disulfide bond formation protein B (169 aa).

Residues 1-8 (MRLSVRWV) are Cytoplasmic-facing. Residues 9-25 (FFLGFFLCALMLAIAGY) form a helical membrane-spanning segment. At 26–43 (FQFVENLEPCPLCILSRV) the chain is on the periplasmic side. An intrachain disulfide couples Cys35 to Cys38. A helical transmembrane segment spans residues 44-60 (AVLAIGGVFLVAALHNP). The Cytoplasmic segment spans residues 61 to 67 (KSWGIKV). A helical membrane pass occupies residues 68–84 (YALLGFVVTLIGIGITG). The Periplasmic portion of the chain corresponds to 85-141 (RHVWLQSLPADQVPACGPGLNFMLDNFPLTETLELVFRGSGECAEVQWSFLGLTIPG). Residues Cys100 and Cys127 are joined by a disulfide bond. Residues 142 to 160 (WTLVAFLFLGVISLWQMGR) traverse the membrane as a helical segment. Residues 161-169 (TGGGAGKLT) lie on the Cytoplasmic side of the membrane.

Belongs to the DsbB family.

The protein localises to the cell inner membrane. Functionally, required for disulfide bond formation in some periplasmic proteins. Acts by oxidizing the DsbA protein. The polypeptide is Disulfide bond formation protein B (Nitrosococcus oceani (strain ATCC 19707 / BCRC 17464 / JCM 30415 / NCIMB 11848 / C-107)).